The chain runs to 439 residues: GTPase Obg (439 aa).

Residues 1–159 (MAFVDQAEIE…RKLKLELKVL (159 aa)) enclose the Obg domain. Positions 160 to 336 (ADVGLVGFPS…LMRLTADLLA (177 aa)) constitute an OBG-type G domain. GTP contacts are provided by residues 166-173 (GFPSAGKS), 191-195 (FTTLS), 213-216 (DLPG), 283-286 (TKMD), and 317-319 (SAL). Mg(2+) contacts are provided by Ser173 and Thr193. The region spanning 358-439 (DFKPEQHNFT…NSDFVFEFSD (82 aa)) is the OCT domain.

This sequence belongs to the TRAFAC class OBG-HflX-like GTPase superfamily. OBG GTPase family. In terms of assembly, monomer. Mg(2+) serves as cofactor.

Its subcellular location is the cytoplasm. Its function is as follows. An essential GTPase which binds GTP, GDP and possibly (p)ppGpp with moderate affinity, with high nucleotide exchange rates and a fairly low GTP hydrolysis rate. Plays a role in control of the cell cycle, stress response, ribosome biogenesis and in those bacteria that undergo differentiation, in morphogenesis control. This Leuconostoc citreum (strain KM20) protein is GTPase Obg.